Consider the following 223-residue polypeptide: Uracil-DNA glycosylase (223 aa).

Catalysis depends on Asp61, which acts as the Proton acceptor.

This sequence belongs to the uracil-DNA glycosylase (UDG) superfamily. UNG family.

It is found in the cytoplasm. The catalysed reaction is Hydrolyzes single-stranded DNA or mismatched double-stranded DNA and polynucleotides, releasing free uracil.. Excises uracil residues from the DNA which can arise as a result of misincorporation of dUMP residues by DNA polymerase or due to deamination of cytosine. The protein is Uracil-DNA glycosylase of Tolumonas auensis (strain DSM 9187 / NBRC 110442 / TA 4).